The chain runs to 587 residues: Laccase abr2 (587 aa).

The signal sequence occupies residues 1-17 (MWYQSASLLGVAAVAQA). 2 Plastocyanin-like domains span residues 41 to 137 (IFVN…VHIR) and 168 to 350 (LVML…ANDG). A glycan (N-linked (GlcNAc...) asparagine) is linked at asparagine 71. Residues histidine 75, histidine 77, histidine 119, and histidine 121 each coordinate Cu cation. N-linked (GlcNAc...) asparagine glycans are attached at residues asparagine 228, asparagine 383, asparagine 420, and asparagine 462. The region spanning 397 to 577 (PPYPAISPAS…ILMDGVDVWP (181 aa)) is the Plastocyanin-like 3 domain. Histidine 487 contributes to the Cu cation binding site. N-linked (GlcNAc...) asparagine glycosylation is present at asparagine 504.

This sequence belongs to the multicopper oxidase family.

The protein localises to the cell surface. It functions in the pathway pigment biosynthesis; melanin biosynthesis. Its function is as follows. Laccase; part of the gene cluster that mediates the biosynthesis of dihydroxynaphthalene (DHN)-melanin, a bluish-green pigment and a structural component of the conidial wall. The first step of the pathway is the production of the heptaketide naphtopyrone YWA1 by the polyketide synthase alb1 though condensation of acetyl-CoA with malonyl-CoA. The naphtopyrone YWA1 is then converted to the pentaketide 1,3,6,8-tetrahydroxynaphthalene (1,3,6,8-THN) by the heptaketide hydrolyase ayg1 though chain-length shortening. 1,3,6,8-THN is substrate of the hydroxynaphthalene reductase arp2 to yield scytalone. The scytalone dehydratase arp1 then reduces scytalone to 1,3,8-THN. 1,3,8-THN is also substrate of the hydroxynaphthalene reductase arp2 to yield vermelone. Vermelone is further converted by the multicopper oxidase abr1 to 1,8-DHN. Finally the laccase abr2 transforms 1,8-DHN to DHN-melanin. DHN-melanin biosynthesis appears to be initiated in endosomes where early enzymes (abl1, ayg1, arp1 and arp2) localize, with exocytosis leading to melanin deposition on the cell surface where late enzymes (abr1 and abr2) localize. DHN-melanin is an important structural component of the outer cell wall and is required for the presence of conidial surface hydrophobins. DHN-melanin also plays a crucial role in fungal virulence, including a protective role against the host's immune defenses. DHN-melanin also protects conidia against amoeba predation. The polypeptide is Laccase abr2 (Aspergillus fumigatus (strain ATCC MYA-4609 / CBS 101355 / FGSC A1100 / Af293) (Neosartorya fumigata)).